A 26-amino-acid polypeptide reads, in one-letter code: Unknown protein 16 (26 aa).

Residues 1 to 26 are disordered; that stretch reads AINSESGVRSVVPQPCNALPNQGPEK.

This is Unknown protein 16 from Pseudotsuga menziesii (Douglas-fir).